The chain runs to 1513 residues: Lid2 complex component lid2 (1513 aa).

Residues 56–97 (GLSVQLNASNMTDPFKFLLDNWHTIFKNGAIKLLPPEGWQIP) form the JmjN domain. Positions 121-212 (YEKNYDYFKK…YIKPFERDSS (92 aa)) constitute an ARID domain. Residues 211 to 253 (SSPSFKSKRSESSTRKIRNTRSSAQQESPIPETSAQSPVQTIQ) are disordered. The span at 230-253 (TRSSAQQESPIPETSAQSPVQTIQ) shows a compositional bias: polar residues. Residues 268-318 (GEQCEYCGLDKNPETILLCDGCEAAYHTSCLDPPLTSIPKEDWYCDACKFN) form a PHD-type 1 zinc finger. In terms of domain architecture, JmjC spans 408-574 (KYSSEPWNLH…DGLLNSSISV (167 aa)). Residue Ser722 is modified to Phosphoserine. Residues 1063–1086 (LSLNDRPGPPMEPASRETSPDSEG) are disordered. A compositionally biased stretch (basic and acidic residues) spans 1076-1086 (ASRETSPDSEG). The PHD-type 2 zinc finger occupies 1093-1145 (KKGCIFCFCRLPESGVMIECEICHEWYHAKCLKMSKKKLRQDEKFTCPICDYR). An RING-type 1; degenerate zinc finger spans residues 1096–1143 (CIFCFCRLPESGVMIECEICHEWYHAKCLKMSKKKLRQDEKFTCPICD). 2 disordered regions span residues 1244–1268 (APNPPPIIGESKSTRKPRPTKRQRQ) and 1280–1327 (ASAI…NNKN). Positions 1257-1268 (TRKPRPTKRQRQ) are enriched in basic residues. The span at 1301–1313 (VEAETKSKSEKSP) shows a compositional bias: basic and acidic residues. Positions 1316–1326 (NGTNISDANNK) are enriched in polar residues. The PHD-type 3 zinc-finger motif lies at 1352 to 1403 (NSSCLCGEEFSPRDSFIDCTICERRFHYDCVGLNNEIADSVSKFTCPICMEQ). The RING-type 2; degenerate zinc finger occupies 1354–1401 (SCLCGEEFSPRDSFIDCTICERRFHYDCVGLNNEIADSVSKFTCPICM).

As to quaternary structure, component of the Lid2 complex composed of ash2, jmj3, lid2, sdc1 and snt2.

The protein localises to the nucleus. In Schizosaccharomyces pombe (strain 972 / ATCC 24843) (Fission yeast), this protein is Lid2 complex component lid2 (lid2).